Here is a 500-residue protein sequence, read N- to C-terminus: Probable cytosol aminopeptidase (500 aa).

The Mn(2+) site is built by lysine 268 and aspartate 273. Lysine 280 is an active-site residue. Residues aspartate 291, aspartate 350, and glutamate 352 each contribute to the Mn(2+) site. Arginine 354 is a catalytic residue.

Belongs to the peptidase M17 family. Requires Mn(2+) as cofactor.

The protein localises to the cytoplasm. The catalysed reaction is Release of an N-terminal amino acid, Xaa-|-Yaa-, in which Xaa is preferably Leu, but may be other amino acids including Pro although not Arg or Lys, and Yaa may be Pro. Amino acid amides and methyl esters are also readily hydrolyzed, but rates on arylamides are exceedingly low.. It carries out the reaction Release of an N-terminal amino acid, preferentially leucine, but not glutamic or aspartic acids.. Functionally, presumably involved in the processing and regular turnover of intracellular proteins. Catalyzes the removal of unsubstituted N-terminal amino acids from various peptides. The protein is Probable cytosol aminopeptidase of Azoarcus sp. (strain BH72).